We begin with the raw amino-acid sequence, 828 residues long: MQAEDARYLKRKVKGGSIDVHPTEKALVVNYELEATILGEMGDPMLGERKECQKIIRLRSLNSTTDIAALAREVVEKCKLIHPSKLPEVEQLLYYLQNRKETTQKAGAKKGELTGKLKDPPPYEGTELNEVANINDIEDYIELLYEDNPEKVRGTALILQLARNPDNLEELQSNETVLGALARVLREEWKHSVELATNIVYIFFCFSSFSQFHSIVAHFKIGALVMGVVEHELKKHLSWNEELLKKKKTAEENPASKRDFEKSTKKYHGLLKKQEQLLRVSFYLLLNLSEDPKVELKMKNKNIIRLLIKTLERDNAELLILVVSFLKKLGIYVENKNEMAEQQIIERLAKLVPCDHEDLLNITLRLLLNLSFDTDLRGKMIKLGMLPKFVELLANDNHRLVVLCVLYHVSQDDKAKSMFTYTDCIPMIMKMMLESPTERLEIELVALGINLACNKHNAQLICEGNGLRLLMRRALKFRDPLLLKMIRNISQHDGPSKAQFIEYISDVARIIKESNDEELVVEALGIMANLTIPDLDYEMIINEFGLVPWIKEKLEPGAAEDDLVLEVVMLVGTVATDDSCAAMLAKSGIIQSLIELLNAKQEDDEIVCQIVYVFYQMVFHEATREVIIKLTQAPAYLIDLMHDKNSEIRKVCDNTLDIISEFDEEWARKIKLEKFRWHNSQWLEMVESQQIDDGEGGLMYGDESYSPYIQESDILDRPDLFYGQTGYEDGEMYDGQVTPEYVDEYGNVQNGEYLGRPASAMYGNRYQSEYESLRPGSRVAYLTEDGQPLDEYGNPIEVYAESVDQYGRPVTPTYQYGSQAQQGPGYPY.

ARM repeat units follow at residues 332–372, 373–411, and 577–611; these read YVEN…NLSF, DTDL…HVSQ, and DDSC…CQIV.

As to quaternary structure, heterotrimer of a 115 kDa subunit (KAP115) and two kinesin-like subunits of 95 kDa (KRP95) and 85 kDa (KRP85).

Functionally, binds to the tail domain of the KRP85/KRP95 heterodimer to form a heterotrimeric kinesin-II complex and may regulate the spindle vesicle targeting of this complex. This is Kinesin-associated protein 3 (KAP115) from Strongylocentrotus purpuratus (Purple sea urchin).